We begin with the raw amino-acid sequence, 118 residues long: uncharacterized protein (118 aa).

The 99-residue stretch at 6–104 (CGFEVTKEVI…WGGYYAEQEY (99 aa)) folds into the HTH hxlR-type domain.

This is an uncharacterized protein from Bacillus subtilis (strain 168).